We begin with the raw amino-acid sequence, 521 residues long: GMP synthase [glutamine-hydrolyzing] (521 aa).

The 196-residue stretch at 8–203 (KILILDFGAQ…VVDVCGCQTL (196 aa)) folds into the Glutamine amidotransferase type-1 domain. The active-site Nucleophile is the C85. Active-site residues include H177 and E179. The region spanning 204 to 396 (WTAANIIDDQ…LGLPRTMVYR (193 aa)) is the GMPS ATP-PPase domain. 231-237 (SGGVDSS) contributes to the ATP binding site.

Homodimer.

The enzyme catalyses XMP + L-glutamine + ATP + H2O = GMP + L-glutamate + AMP + diphosphate + 2 H(+). It functions in the pathway purine metabolism; GMP biosynthesis; GMP from XMP (L-Gln route): step 1/1. Catalyzes the synthesis of GMP from XMP. The polypeptide is GMP synthase [glutamine-hydrolyzing] (Xanthomonas campestris pv. campestris (strain B100)).